The chain runs to 156 residues: Arginine repressor (156 aa).

The protein belongs to the ArgR family.

It is found in the cytoplasm. Its pathway is amino-acid biosynthesis; L-arginine biosynthesis [regulation]. Its function is as follows. Regulates arginine biosynthesis genes. In Shewanella piezotolerans (strain WP3 / JCM 13877), this protein is Arginine repressor.